A 125-amino-acid chain; its full sequence is Cytochrome c-556 (125 aa).

Met-13, Cys-113, Cys-116, and His-117 together coordinate heme. Heme c-binding residues include Met-13, Cys-113, Cys-116, and His-117.

Monomer. In terms of processing, binds 1 heme c group covalently per subunit.

Low-spin monoheme cytochrome c. This chain is Cytochrome c-556, found in Agrobacterium tumefaciens (strain apple 185).